A 188-amino-acid polypeptide reads, in one-letter code: UPF0232 protein RHA1_ro03670 (188 aa).

Disordered stretches follow at residues 1 to 20 (MTDD…PEVK), 31 to 78 (EARA…QPFG), and 166 to 188 (PTAP…DTYG). The span at 7 to 16 (PTAPAAAAPE) shows a compositional bias: low complexity.

The protein belongs to the UPF0232 family.

The polypeptide is UPF0232 protein RHA1_ro03670 (Rhodococcus jostii (strain RHA1)).